Consider the following 732-residue polypeptide: MTTLESLKIEDIPVDDIDFSDLEREFQIQDGGVNFDNFLVVDGAPVAPEAKVPVLEKVLTKLFSQAGKVLDMQIPVEDGKTKGHLFIEMESVSAAKEAIQLFNGKKLDAKHRLLVNSLNDMEKYGSDDFESQSHEPVVPDFAPTDFLRSWLQNQDGRDQFVLQKGDMTRVFWNRLAHQPDGVGEARKNWSNDVVKFSPKGTYLLSFHDQGVTSWGGPNFDRLKRFFHPDVSRLDVSPTEKFLITFSMNPIKPGEDTPFGPESEGHQICVWDLATGFLMKTFGIPPNAKLQWPLIRFSYDDKYCGRLGPNALAIYDIENNFQLLDGKLHKVEGIQDFSFAPKGVQLTYNRRKSDPTTLLAYWTPETNNQSCKAFLMTLPNKRIVKTVNLVQVSNVSIHWHEQADFVCFQVDRHTKSKKTFFTNLEICKLNESEIPVEKIEMKDRVLELAWEPKGTRFVTISKMDNGGEENPMYPKNFVKFFAPEKKDNKDKDLAVLPDQLKWKLVKTVDQQFANCISWSPAGRFVAVCTIVNGKEIKKASLDFYDFDFTGEKTLNEVQDVKASLQAVAHIDNQFFTDLEWDSSGRFLTAWSSYSKHKLENGYTIYNCCGEAVRKEIVDQFRNFVWRPRPESLLSNAEKKKARKNLKQWSVKFEEQDAMESDSALRDLILKRRAELSAWVSYREQSKERLESEDSYTIFDNFESDKADETQYVTVEEVKEEILEETQEEVESFE.

The interval 1–94 is sufficient for interaction with HCR1 and TIF32; sequence MTTLESLKIE…LFIEMESVSA (94 aa). A sufficient for interaction with PIC8 region spans residues 1–219; sequence MTTLESLKIE…GVTSWGGPNF (219 aa). The region spanning 37-120 is the RRM domain; it reads NFLVVDGAPV…HRLLVNSLND (84 aa). WD repeat units follow at residues 185–224, 237–280, 439–481, and 507–554; these read ARKN…RLKR, PTEK…LMKT, EMKD…KFFA, and VDQQ…KTLN.

Belongs to the eIF-3 subunit B family. In terms of assembly, component of the eukaryotic translation initiation factor 3 (eIF-3) complex.

Its subcellular location is the cytoplasm. RNA-binding component of the eukaryotic translation initiation factor 3 (eIF-3) complex, which is involved in protein synthesis of a specialized repertoire of mRNAs and, together with other initiation factors, stimulates binding of mRNA and methionyl-tRNAi to the 40S ribosome. The eIF-3 complex specifically targets and initiates translation of a subset of mRNAs involved in cell proliferation. In Kluyveromyces lactis (strain ATCC 8585 / CBS 2359 / DSM 70799 / NBRC 1267 / NRRL Y-1140 / WM37) (Yeast), this protein is Eukaryotic translation initiation factor 3 subunit B.